We begin with the raw amino-acid sequence, 149 residues long: Nucleoside diphosphate kinase (149 aa).

ATP-binding residues include K9, F57, R85, T91, R102, and N112. H115 serves as the catalytic Pros-phosphohistidine intermediate.

Belongs to the NDK family. As to quaternary structure, homotetramer. Mg(2+) is required as a cofactor.

The protein resides in the cytoplasm. It catalyses the reaction a 2'-deoxyribonucleoside 5'-diphosphate + ATP = a 2'-deoxyribonucleoside 5'-triphosphate + ADP. It carries out the reaction a ribonucleoside 5'-diphosphate + ATP = a ribonucleoside 5'-triphosphate + ADP. Major role in the synthesis of nucleoside triphosphates other than ATP. The ATP gamma phosphate is transferred to the NDP beta phosphate via a ping-pong mechanism, using a phosphorylated active-site intermediate. The polypeptide is Nucleoside diphosphate kinase (Acaryochloris marina (strain MBIC 11017)).